Consider the following 158-residue polypeptide: MFRIGQGYDAHRFKEGDHIVLCGVKIPFGRGFAAHSDGDVALHALCDALLGAAALGDIGRHFPDTDARYKGIDSRVLLREVRQRIASLGYTVGNVDVTVVAQAPRLAAHIQAMRENLAQDLEIPPDCVNVKATTTEGMGFEGRGEGISAHAVALLARR.

Residues D9 and H11 each contribute to the a divalent metal cation site. Residues 9–11 (DAH) and 35–36 (HS) each bind 4-CDP-2-C-methyl-D-erythritol 2-phosphate. H43 provides a ligand contact to a divalent metal cation. 4-CDP-2-C-methyl-D-erythritol 2-phosphate-binding positions include 57–59 (DIG), 62–66 (FPDTD), 133–136 (TTTE), F140, and R143.

It belongs to the IspF family. In terms of assembly, homotrimer. It depends on a divalent metal cation as a cofactor.

It catalyses the reaction 4-CDP-2-C-methyl-D-erythritol 2-phosphate = 2-C-methyl-D-erythritol 2,4-cyclic diphosphate + CMP. The protein operates within isoprenoid biosynthesis; isopentenyl diphosphate biosynthesis via DXP pathway; isopentenyl diphosphate from 1-deoxy-D-xylulose 5-phosphate: step 4/6. In terms of biological role, involved in the biosynthesis of isopentenyl diphosphate (IPP) and dimethylallyl diphosphate (DMAPP), two major building blocks of isoprenoid compounds. Catalyzes the conversion of 4-diphosphocytidyl-2-C-methyl-D-erythritol 2-phosphate (CDP-ME2P) to 2-C-methyl-D-erythritol 2,4-cyclodiphosphate (ME-CPP) with a corresponding release of cytidine 5-monophosphate (CMP). This is 2-C-methyl-D-erythritol 2,4-cyclodiphosphate synthase from Methylococcus capsulatus (strain ATCC 33009 / NCIMB 11132 / Bath).